The chain runs to 66 residues: Large ribosomal subunit protein bL35 (66 aa).

It belongs to the bacterial ribosomal protein bL35 family.

The chain is Large ribosomal subunit protein bL35 from Jannaschia sp. (strain CCS1).